The following is a 661-amino-acid chain: UvrABC system protein B (661 aa).

In terms of domain architecture, Helicase ATP-binding spans 25 to 414 (AGLNSKKRSQ…DTVVELIIRP (390 aa)). ATP is bound at residue 38–45 (GITGSGKT). Positions 91–114 (YYDYYQPEAYIARTDTFIEKDSSI) match the Beta-hairpin motif. The Helicase C-terminal domain maps to 430-592 (QVEDLIGEIQ…IIPKTINRAI (163 aa)). The region spanning 621–656 (KAHIEKLKKDMLKAASNLEFEQAAKLRDQLKTLEEA) is the UVR domain.

It belongs to the UvrB family. As to quaternary structure, forms a heterotetramer with UvrA during the search for lesions. Interacts with UvrC in an incision complex.

It is found in the cytoplasm. The UvrABC repair system catalyzes the recognition and processing of DNA lesions. A damage recognition complex composed of 2 UvrA and 2 UvrB subunits scans DNA for abnormalities. Upon binding of the UvrA(2)B(2) complex to a putative damaged site, the DNA wraps around one UvrB monomer. DNA wrap is dependent on ATP binding by UvrB and probably causes local melting of the DNA helix, facilitating insertion of UvrB beta-hairpin between the DNA strands. Then UvrB probes one DNA strand for the presence of a lesion. If a lesion is found the UvrA subunits dissociate and the UvrB-DNA preincision complex is formed. This complex is subsequently bound by UvrC and the second UvrB is released. If no lesion is found, the DNA wraps around the other UvrB subunit that will check the other stand for damage. The chain is UvrABC system protein B from Rickettsia felis (strain ATCC VR-1525 / URRWXCal2) (Rickettsia azadi).